Here is a 285-residue protein sequence, read N- to C-terminus: Coagulation factor IX (285 aa).

Sulfotyrosine is present on Tyr23. Residue Asn25 is glycosylated (N-linked (GlcNAc...) asparagine). Thr27 carries the post-translational modification Phosphothreonine; alternate. Thr27 is a glycosylation site (O-linked (GalNAc...) threonine; alternate). Asn45 carries an N-linked (GlcNAc...) asparagine glycan. The O-linked (GalNAc...) threonine glycan is linked to Thr47. The Peptidase S1 domain maps to 59–285 (VVGGEDAKPG…YTKVSRYVNW (227 aa)). Cys84 and Cys100 are joined by a disulfide. His99 (charge relay system) is an active-site residue. Residues Asn115, Glu120, and Glu123 each contribute to the Ca(2+) site. Asn127 and Asn138 each carry an N-linked (GlcNAc...) asparagine glycan. The Charge relay system role is filled by Asp147. 2 disulfides stabilise this stretch: Cys214-Cys228 and Cys239-Cys267. Ser243 functions as the Charge relay system in the catalytic mechanism.

It belongs to the peptidase S1 family. Heterodimer of a light chain and a heavy chain; disulfide-linked. Interacts (inactive and activated) with F11 (activated) in calcium-dependent manner. Interacts with SERPINC1. Post-translationally, activated by factor XIa, which excises the activation peptide. The propeptide can also be removed by snake venom protease. Activated by coagulation factor VIIa-tissue factor (F7-F3) complex in calcium-dependent manner.

Its subcellular location is the secreted. The catalysed reaction is Selective cleavage of Arg-|-Ile bond in factor X to form factor Xa.. Functionally, factor IX is a vitamin K-dependent plasma protein that participates in the intrinsic pathway of blood coagulation by converting factor X to its active form in the presence of Ca(2+) ions, phospholipids, and factor VIIIa. The sequence is that of Coagulation factor IX (F9) from Cavia porcellus (Guinea pig).